Consider the following 456-residue polypeptide: Protein FAM124B (456 aa).

The disordered stretch occupies residues 262–313; it reads NGCLRGDTHPQDSSLNSVSTQRTLEPRSRRRSRSRRFKVHSLELPQPSGSWE. A compositionally biased stretch (polar residues) spans 272 to 284; that stretch reads QDSSLNSVSTQRT. Residues 289 to 300 are compositionally biased toward basic residues; sequence SRRRSRSRRFKV.

It belongs to the FAM124 family. In terms of assembly, interacts with CHD7 and CHD8. Expressed strongly in lung, at slightly lower levels in heart, kidney, brain and testis, and weakly in liver (at protein level). In brain, highly expressed in cortex, hippocampus, dentate gyrus, caudate putamen and cerebellum (at protein level).

It localises to the nucleus. This chain is Protein FAM124B (Fam124b), found in Mus musculus (Mouse).